The following is a 464-amino-acid chain: MSSPLIPVILSGGNGTRLWPLSREEYPKQFLKLTDSISMLQSTISRLDSLNTSSPVVICNELHRFIVAEQLRHLNKLDNNIILEPSGRNTAPAICIAALILKMKHPNENPLMLVLPADHSVKKVKTFCNTIKSAIPFAEAGNLVSFGIKPTHPETGYGYIQKGKVLSDSDIYEVSEVRTFVEKPNLKTAESFIEKDEYYWNSGMYLFSVERYLQELSLYRPDIVKVCQETVKNIHYDMDFIRLDDKIFRNCPQESIDYAVMEKTKDAVVATMDIGWNDVGAWSSLWELGKKDSSGNVITGDIVCHETENSYIYTESGLVATIGIQDLVIIHTKDSLLVSRRDSVQNVKNIVQHLDLSGRKEHKEHREVFKSWGRCDSIDSSEKYHYQVKRITVNPSENYRCNYIITVRNIGVVVMGIAKLTVAEEIKILKENESVYIPAGIKHSLKILDNTTCVNRSLDRFLSC.

The protein belongs to the mannose-6-phosphate isomerase type 2 family.

The catalysed reaction is alpha-D-mannose 1-phosphate + GTP + H(+) = GDP-alpha-D-mannose + diphosphate. It functions in the pathway nucleotide-sugar biosynthesis; GDP-alpha-D-mannose biosynthesis; GDP-alpha-D-mannose from alpha-D-mannose 1-phosphate (GTP route): step 1/1. The protein operates within bacterial outer membrane biogenesis; LPS O-antigen biosynthesis. Functionally, involved in GDP-mannose biosynthesis which serves as the activated sugar nucleotide precursor for mannose residues in cell surface polysaccharides. This enzyme participates in synthesis of the LPS O7 antigen. The chain is Mannose-1-phosphate guanylyltransferase (manC) from Escherichia coli.